Reading from the N-terminus, the 330-residue chain is Zinc finger protein Gfi-1b (330 aa).

Residues 1–20 (MPRSFLVKSKKAHTYHQPRA) are SNAG domain. Disordered stretches follow at residues 1–21 (MPRSFLVKSKKAHTYHQPRAQ) and 75–99 (MASAPEGPLVTPQPQDGESPLSESP). K8 is subject to N6,N6-dimethyllysine. An interaction with ARIH2 region spans residues 91-330 (GESPLSESPP…RHRESQHNLK (240 aa)). 6 C2H2-type zinc fingers span residues 163 to 186 (YHCVKCNKVFSTPHGLEVHVRRSH), 192 to 214 (FACDVCGKTFGHAVSLEQHTHVH), 220 to 242 (FECRMCGKAFKRSSTLSTHLLIH), 248 to 270 (YPCQFCGKRFHQKSDMKKHTYIH), 276 to 298 (HKCQVCGKAFSQSSNLITHSRKH), and 304 to 327 (FSCELCTKGFQRKVDLRRHRESQH). The mediates interaction with GATA1 stretch occupies residues 164 to 330 (HCVKCNKVFS…RHRESQHNLK (167 aa)).

Interacts with histone methyltransferases EHMT2 and SUV39H1. Interacts with ARIH2 (via RING-type 2) and with RUNX1T1. Forms a complex with GATA1. Component of a RCOR-GFI-KDM1A-HDAC complex. Interacts directly with RCOR1, KDM1A and HDAC2. Methylation at Lys-8 in the SNAG domain seems required for the recruitment of the corepressor complex. In terms of tissue distribution, expressed in bone marrow and in spleen. Detected in hematopoietic stem cells, erythroblasts, and megakaryocytes. Expressed in thymocytes.

It is found in the nucleus. Functionally, essential proto-oncogenic transcriptional regulator necessary for development and differentiation of erythroid and megakaryocytic lineages. Component of a RCOR-GFI-KDM1A-HDAC complex that suppresses, via histone deacetylase (HDAC) recruitment, a number of genes implicated in multilineage blood cell development and controls hematopoietic differentiation. Transcriptional repressor or activator depending on both promoter and cell type context; represses promoter activity of SOCS1 and SOCS3 and thus, may regulate cytokine signaling pathways. Cooperates with GATA1 to repress target gene transcription, such as the apoptosis regulator BCL2L1; GFI1B silencing in leukemic cell lines markedly increase apoptosis rate. Inhibits down-regulation of MYC and MYB as well as the cyclin-dependent kinase inhibitor CDKN1A/P21WAF1 in IL6-treated myelomonocytic cells. Represses expression of GATA3 in T-cell lymphomas and inhibits GATA1-mediated transcription; as GATA1 also mediates erythroid GFI1B transcription, both GATA1 and GFI1B participate in a feedback regulatory pathway controlling the expression of GFI1B gene in erythroid cells. Suppresses GATA1-mediated stimulation of GFI1B promoter through protein interaction. Binds to gamma-satellite DNA and to its own promoter, auto-repressing its own expression. Alters histone methylation by recruiting histone methyltransferase to target genes promoters. Plays a role in heterochromatin formation. The chain is Zinc finger protein Gfi-1b (Gfi1b) from Mus musculus (Mouse).